A 163-amino-acid chain; its full sequence is Olfactory marker protein (163 aa).

Ala2 carries the post-translational modification N-acetylalanine.

This sequence belongs to the olfactory marker protein family. As to quaternary structure, interacts with BEX1 and BEX2. Uniquely associated with mature olfactory receptor neurons.

It localises to the cytoplasm. In terms of biological role, may act as a modulator of the olfactory signal-transduction cascade. In Mus musculus (Mouse), this protein is Olfactory marker protein (Omp).